Reading from the N-terminus, the 654-residue chain is Protein fem-1 homolog A-A (654 aa).

ANK repeat units lie at residues Asp-2 to Leu-31, Gly-40 to Ala-70, Glu-82 to Arg-111, Thr-115 to Val-145, His-149 to Arg-178, Lys-182 to Arg-211, and Tyr-214 to Gln-243. Phosphoserine is present on Ser-108. The tract at residues Glu-242 to Pro-265 is disordered. The span at Gly-253–Ser-263 shows a compositional bias: polar residues. 2 TPR repeats span residues Val-283–Gly-317 and Ser-375–Asn-408. ANK repeat units lie at residues Asn-519–Ser-561 and Asp-565–Ala-594. Phosphoserine is present on Ser-608.

It belongs to the fem-1 family. As to quaternary structure, component of a CRL2 E3 ubiquitin-protein ligase complex, also named ECS (Elongin BC-CUL2/5-SOCS-box protein) complex, composed of CUL2, Elongin BC (ELOB and ELOC), RBX1 and substrate-specific adapter FEM1A. Interacts with PTGER4. Interacts with NFKB1; the interaction is direct. In terms of processing, phosphorylated; highly phosphorylated in myoblasts and myotubes. Phosphorylation at Ser-108 and Ser-608 promote PGE2-EP4-mediated inhibition of inflammation. Dephosphorylated by protein phosphatase 2A (PP2A). As to expression, preferentially expressed in cardiac muscle, brain and liver (at protein level). Also expressed in skeletal muscle.

It is found in the mitochondrion. The protein resides in the cytoplasm. It participates in protein modification; protein ubiquitination. In terms of biological role, substrate-recognition component of a Cul2-RING (CRL2) E3 ubiquitin-protein ligase complex of the DesCEND (destruction via C-end degrons) pathway, which recognizes a C-degron located at the extreme C terminus of target proteins, leading to their ubiquitination and degradation. The C-degron recognized by the DesCEND pathway is usually a motif of less than ten residues and can be present in full-length proteins, truncated proteins or proteolytically cleaved forms. The CRL2(FEM1A) complex specifically recognizes proteins with an arginine at the C-terminus: recognizes and binds proteins ending with -Lys/Arg-Xaa-Arg and -Lys/Arg-Xaa-Xaa-Arg C-degrons, such as SIL1 or OR51B2, leading to their ubiquitination and degradation. Involved in PGE2-EP4-mediated inhibition of inflammation of macrophages via interaction with NFKB1 and PTGER4. Promotes inflammation in brain microglia through MAP2K4/MKK4-mediated signaling. The chain is Protein fem-1 homolog A-A from Mus musculus (Mouse).